We begin with the raw amino-acid sequence, 744 residues long: Phosphoribosylformylglycinamidine synthase subunit PurL (744 aa).

Residue His-49 is part of the active site. 2 residues coordinate ATP: Tyr-52 and Lys-91. Residue Glu-93 participates in Mg(2+) binding. Substrate contacts are provided by residues 94–97 and Arg-116; that span reads SHNH. The active-site Proton acceptor is His-95. Residue Asp-117 coordinates Mg(2+). Gln-240 is a substrate binding site. Residue Asp-268 participates in Mg(2+) binding. 312–314 lines the substrate pocket; sequence ESQ. 2 residues coordinate ATP: Asp-493 and Gly-530. Mg(2+) is bound at residue Asn-531. Ser-533 serves as a coordination point for substrate.

The protein belongs to the FGAMS family. As to quaternary structure, monomer. Part of the FGAM synthase complex composed of 1 PurL, 1 PurQ and 2 PurS subunits.

The protein resides in the cytoplasm. It carries out the reaction N(2)-formyl-N(1)-(5-phospho-beta-D-ribosyl)glycinamide + L-glutamine + ATP + H2O = 2-formamido-N(1)-(5-O-phospho-beta-D-ribosyl)acetamidine + L-glutamate + ADP + phosphate + H(+). It participates in purine metabolism; IMP biosynthesis via de novo pathway; 5-amino-1-(5-phospho-D-ribosyl)imidazole from N(2)-formyl-N(1)-(5-phospho-D-ribosyl)glycinamide: step 1/2. In terms of biological role, part of the phosphoribosylformylglycinamidine synthase complex involved in the purines biosynthetic pathway. Catalyzes the ATP-dependent conversion of formylglycinamide ribonucleotide (FGAR) and glutamine to yield formylglycinamidine ribonucleotide (FGAM) and glutamate. The FGAM synthase complex is composed of three subunits. PurQ produces an ammonia molecule by converting glutamine to glutamate. PurL transfers the ammonia molecule to FGAR to form FGAM in an ATP-dependent manner. PurS interacts with PurQ and PurL and is thought to assist in the transfer of the ammonia molecule from PurQ to PurL. In Nitrobacter hamburgensis (strain DSM 10229 / NCIMB 13809 / X14), this protein is Phosphoribosylformylglycinamidine synthase subunit PurL.